The chain runs to 219 residues: Large ribosomal subunit protein uL4 (219 aa).

Residues alanine 43–arginine 101 form a disordered region. A compositionally biased stretch (basic residues) spans glycine 61–glycine 72.

This sequence belongs to the universal ribosomal protein uL4 family. Part of the 50S ribosomal subunit.

One of the primary rRNA binding proteins, this protein initially binds near the 5'-end of the 23S rRNA. It is important during the early stages of 50S assembly. It makes multiple contacts with different domains of the 23S rRNA in the assembled 50S subunit and ribosome. Functionally, forms part of the polypeptide exit tunnel. The chain is Large ribosomal subunit protein uL4 from Streptomyces coelicolor (strain ATCC BAA-471 / A3(2) / M145).